The chain runs to 535 residues: T-complex protein 1 subunit epsilon (535 aa).

It belongs to the TCP-1 chaperonin family. In terms of assembly, heterooligomeric complex of about 850 to 900 kDa that forms two stacked rings, 12 to 16 nm in diameter.

Its subcellular location is the cytoplasm. Functionally, molecular chaperone; assists the folding of proteins upon ATP hydrolysis. Known to play a role, in vitro, in the folding of actin and tubulin. This Avena sativa (Oat) protein is T-complex protein 1 subunit epsilon.